The chain runs to 527 residues: Glutamate--cysteine ligase (527 aa).

It belongs to the glutamate--cysteine ligase type 1 family. Type 1 subfamily.

It carries out the reaction L-cysteine + L-glutamate + ATP = gamma-L-glutamyl-L-cysteine + ADP + phosphate + H(+). It participates in sulfur metabolism; glutathione biosynthesis; glutathione from L-cysteine and L-glutamate: step 1/2. This chain is Glutamate--cysteine ligase, found in Bordetella bronchiseptica (strain ATCC BAA-588 / NCTC 13252 / RB50) (Alcaligenes bronchisepticus).